The chain runs to 960 residues: UvrABC system protein A (960 aa).

Glycine 35–serine 42 is an ATP binding site. The segment at cysteine 270–cysteine 297 adopts a C4-type zinc-finger fold. 2 ABC transporter domains span residues phenylalanine 327 to leucine 605 and glycine 625 to lysine 953. ATP is bound at residue glycine 657–serine 664. The segment at cysteine 756 to cysteine 782 adopts a C4-type zinc-finger fold.

It belongs to the ABC transporter superfamily. UvrA family. Forms a heterotetramer with UvrB during the search for lesions.

The protein localises to the cytoplasm. Its function is as follows. The UvrABC repair system catalyzes the recognition and processing of DNA lesions. UvrA is an ATPase and a DNA-binding protein. A damage recognition complex composed of 2 UvrA and 2 UvrB subunits scans DNA for abnormalities. When the presence of a lesion has been verified by UvrB, the UvrA molecules dissociate. In Treponema pallidum (strain Nichols), this protein is UvrABC system protein A.